A 158-amino-acid polypeptide reads, in one-letter code: Protein Smg homolog (158 aa).

It belongs to the Smg family.

The sequence is that of Protein Smg homolog from Vibrio atlanticus (strain LGP32) (Vibrio splendidus (strain Mel32)).